Consider the following 382-residue polypeptide: D-galactonate dehydratase (382 aa).

Residue D183 coordinates Mg(2+). H185 (proton donor) is an active-site residue. The Mg(2+) site is built by E209 and E235. Residue H285 is the Proton acceptor of the active site.

This sequence belongs to the mandelate racemase/muconate lactonizing enzyme family. GalD subfamily. Mg(2+) serves as cofactor.

The enzyme catalyses D-galactonate = 2-dehydro-3-deoxy-D-galactonate + H2O. The protein operates within carbohydrate acid metabolism; D-galactonate degradation; D-glyceraldehyde 3-phosphate and pyruvate from D-galactonate: step 1/3. Its function is as follows. Catalyzes the dehydration of D-galactonate to 2-keto-3-deoxy-D-galactonate. This Escherichia coli O45:K1 (strain S88 / ExPEC) protein is D-galactonate dehydratase.